Reading from the N-terminus, the 136-residue chain is Histone H3.2 (136 aa).

The disordered stretch occupies residues 1 to 45; the sequence is MARTKQTARKSTGGKAPRKQLATKAARKSAPATGGVKKPHRYRPG. Arg-3 bears the Asymmetric dimethylarginine; by PRMT6; alternate mark. Residue Arg-3 is modified to Citrulline; alternate. The residue at position 4 (Thr-4) is a Phosphothreonine; by HASPIN and VRK1. Position 5 is an allysine; alternate (Lys-5). Lys-5 is modified (N6,N6,N6-trimethyllysine; alternate). Lys-5 is subject to N6,N6-dimethyllysine; alternate. The residue at position 5 (Lys-5) is an N6-(2-hydroxyisobutyryl)lysine; alternate. Position 5 is an N6-(beta-hydroxybutyryl)lysine; alternate (Lys-5). An N6-acetyllysine; alternate modification is found at Lys-5. Lys-5 bears the N6-crotonyllysine; alternate mark. Lys-5 bears the N6-methyllysine; alternate mark. Residue Gln-6 is modified to 5-glutamyl dopamine; alternate. The residue at position 6 (Gln-6) is a 5-glutamyl serotonin; alternate. Thr-7 carries the post-translational modification Phosphothreonine; by PKC. Arg-9 bears the Citrulline; alternate mark. At Arg-9 the chain carries Symmetric dimethylarginine; by PRMT5; alternate. N6,N6,N6-trimethyllysine; alternate is present on Lys-10. Lys-10 carries the post-translational modification N6,N6-dimethyllysine; alternate. Lys-10 is modified (N6-(2-hydroxyisobutyryl)lysine; alternate). Lys-10 carries the post-translational modification N6-(beta-hydroxybutyryl)lysine; alternate. Lys-10 is modified (N6-acetyllysine; alternate). N6-crotonyllysine; alternate is present on Lys-10. Residue Lys-10 is modified to N6-methyllysine; alternate. N6-lactoyllysine; alternate is present on Lys-10. Position 11 is an ADP-ribosylserine; alternate (Ser-11). Ser-11 is modified (phosphoserine; alternate; by AURKB, AURKC, RPS6KA3, RPS6KA4 and RPS6KA5). Thr-12 carries the phosphothreonine; by PKC modification. Lys-15 carries the post-translational modification N6-(2-hydroxyisobutyryl)lysine; alternate. Lys-15 bears the N6-(beta-hydroxybutyryl)lysine; alternate mark. The residue at position 15 (Lys-15) is an N6-acetyllysine; alternate. N6-lactoyllysine; alternate is present on Lys-15. An N6-glutaryllysine; alternate modification is found at Lys-15. Lys-15 bears the N6-succinyllysine; alternate mark. Residue Arg-18 is modified to Citrulline; alternate. An Asymmetric dimethylarginine; by CARM1; alternate modification is found at Arg-18. N6-(2-hydroxyisobutyryl)lysine; alternate occurs at positions 19 and 24. An N6-(beta-hydroxybutyryl)lysine; alternate mark is found at Lys-19 and Lys-24. N6-acetyllysine; alternate occurs at positions 19 and 24. Lys-19 and Lys-24 each carry N6-crotonyllysine; alternate. N6-methyllysine; alternate occurs at positions 19 and 24. An N6-lactoyllysine; alternate mark is found at Lys-19 and Lys-24. 2 positions are modified to N6-glutaryllysine; alternate: Lys-19 and Lys-24. N6-butyryllysine; alternate occurs at positions 19 and 24. Lys-19 is lipidated: N6-decanoyllysine. Citrulline is present on Arg-27. An N6,N6,N6-trimethyllysine; alternate modification is found at Lys-28. Lys-28 carries the post-translational modification N6,N6-dimethyllysine; alternate. The residue at position 28 (Lys-28) is an N6-(2-hydroxyisobutyryl)lysine; alternate. Lys-28 is modified (N6-acetyllysine; alternate). Lys-28 carries the post-translational modification N6-crotonyllysine; alternate. Lys-28 bears the N6-methyllysine; alternate mark. Residue Lys-28 is modified to N6-lactoyllysine; alternate. An N6-glutaryllysine; alternate modification is found at Lys-28. Position 29 is an ADP-ribosylserine; alternate (Ser-29). The residue at position 29 (Ser-29) is a Phosphoserine; alternate; by AURKB, AURKC and RPS6KA5. An N6,N6,N6-trimethyllysine; alternate modification is found at Lys-37. At Lys-37 the chain carries N6,N6-dimethyllysine; alternate. Lys-37 is subject to N6-(2-hydroxyisobutyryl)lysine; alternate. An N6-acetyllysine; alternate modification is found at Lys-37. The residue at position 37 (Lys-37) is an N6-methyllysine; alternate. At Lys-38 the chain carries N6-methyllysine. Residue Tyr-42 is modified to Phosphotyrosine. Residue Lys-57 is modified to N6,N6,N6-trimethyllysine; alternate. N6-(2-hydroxyisobutyryl)lysine; alternate is present on Lys-57. Residue Lys-57 is modified to N6-(beta-hydroxybutyryl)lysine; alternate. Lys-57 bears the N6-acetyllysine; alternate mark. An N6-crotonyllysine; alternate modification is found at Lys-57. Residue Lys-57 is modified to N6-lactoyllysine; alternate. At Lys-57 the chain carries N6-glutaryllysine; alternate. Lys-57 is modified (N6-succinyllysine; alternate). Lys-57 is subject to N6-methyllysine; by EHMT2; alternate. Ser-58 is subject to Phosphoserine. An N6-(2-hydroxyisobutyryl)lysine; alternate mark is found at Lys-65 and Lys-80. 2 positions are modified to N6-methyllysine; alternate: Lys-65 and Lys-80. Position 80 is an N6,N6,N6-trimethyllysine; alternate (Lys-80). At Lys-80 the chain carries N6,N6-dimethyllysine; alternate. Lys-80 carries the N6-acetyllysine; alternate modification. Position 80 is an N6-lactoyllysine; alternate (Lys-80). The residue at position 80 (Lys-80) is an N6-glutaryllysine; alternate. Lys-80 is subject to N6-succinyllysine; alternate. Thr-81 carries the post-translational modification Phosphothreonine. Position 87 is a phosphoserine (Ser-87). The residue at position 108 (Thr-108) is a Phosphothreonine. Cys-111 carries S-palmitoyl cysteine lipidation. An N6-acetyllysine; alternate mark is found at Lys-116 and Lys-123. An N6-glutaryllysine; alternate mark is found at Lys-116 and Lys-123. Lys-123 bears the N6-(2-hydroxyisobutyryl)lysine; alternate mark. Lys-123 is modified (N6-methyllysine; alternate). Lys-123 carries the N6-succinyllysine; alternate modification.

It belongs to the histone H3 family. As to quaternary structure, the nucleosome is a histone octamer containing two molecules each of H2A, H2B, H3 and H4 assembled in one H3-H4 heterotetramer and two H2A-H2B heterodimers. The octamer wraps approximately 147 bp of DNA. During nucleosome assembly the chaperone ASF1A interacts with the histone H3-H4 heterodimer (via C-terminus of H3); this interaction is direct. Interacts with DNAJC9, CHAF1A and CHAF1B. Interacts with NASP; NASP is a histone chaperone that stabilizes and maintains a soluble pool of Histone H3-H4 dimers. In terms of processing, acetylation is generally linked to gene activation. Acetylation on Lys-10 (H3K9ac) impairs methylation at Arg-9 (H3R8me2s). Acetylation on Lys-19 (H3K18ac) and Lys-24 (H3K24ac) favors methylation at Arg-18 (H3R17me). Acetylation at Lys-123 (H3K122ac) by EP300/p300 plays a central role in chromatin structure: localizes at the surface of the histone octamer and stimulates transcription, possibly by promoting nucleosome instability. Citrullination at Arg-9 (H3R8ci) and/or Arg-18 (H3R17ci) by PADI4 impairs methylation and represses transcription. Post-translationally, asymmetric dimethylation at Arg-18 (H3R17me2a) by CARM1 is linked to gene activation. Symmetric dimethylation at Arg-9 (H3R8me2s) by PRMT5 is linked to gene repression. Asymmetric dimethylation at Arg-3 (H3R2me2a) by PRMT6 is linked to gene repression and is mutually exclusive with H3 Lys-5 methylation (H3K4me2 and H3K4me3). H3R2me2a is present at the 3' of genes regardless of their transcription state and is enriched on inactive promoters, while it is absent on active promoters. In terms of processing, methylation at Lys-5 (H3K4me), Lys-37 (H3K36me) and Lys-80 (H3K79me) are linked to gene activation. Methylation at Lys-5 (H3K4me) facilitates subsequent acetylation of H3 and H4. Methylation at Lys-80 (H3K79me) is associated with DNA double-strand break (DSB) responses and is a specific target for TP53BP1. Methylation at Lys-10 (H3K9me) and Lys-28 (H3K27me) are linked to gene repression. Methylation at Lys-10 (H3K9me) is a specific target for HP1 proteins (CBX1, CBX3 and CBX5) and prevents subsequent phosphorylation at Ser-11 (H3S10ph) and acetylation of H3 and H4. Methylation at Lys-5 (H3K4me) and Lys-80 (H3K79me) require preliminary monoubiquitination of H2B at 'Lys-120'. Methylation at Lys-10 (H3K9me) and Lys-28 (H3K27me) are enriched in inactive X chromosome chromatin. Monomethylation at Lys-57 (H3K56me1) by EHMT2/G9A in G1 phase promotes interaction with PCNA and is required for DNA replication. Phosphorylated at Thr-4 (H3T3ph) by VRK1. Phosphorylated at Thr-4 (H3T3ph) by HASPIN during prophase and dephosphorylated during anaphase. Phosphorylation at Ser-11 (H3S10ph) by AURKB is crucial for chromosome condensation and cell-cycle progression during mitosis and meiosis. In addition phosphorylation at Ser-11 (H3S10ph) by RPS6KA4 and RPS6KA5 is important during interphase because it enables the transcription of genes following external stimulation, like mitogens, stress, growth factors or UV irradiation and result in the activation of genes, such as c-fos and c-jun. Phosphorylation at Ser-11 (H3S10ph), which is linked to gene activation, prevents methylation at Lys-10 (H3K9me) but facilitates acetylation of H3 and H4. Phosphorylation at Ser-11 (H3S10ph) by AURKB mediates the dissociation of HP1 proteins (CBX1, CBX3 and CBX5) from heterochromatin. Phosphorylation at Ser-11 (H3S10ph) is also an essential regulatory mechanism for neoplastic cell transformation. Phosphorylated at Ser-29 (H3S28ph) by MAP3K20 isoform 1, RPS6KA5 or AURKB during mitosis or upon ultraviolet B irradiation. Phosphorylation at Thr-7 (H3T6ph) by PRKCB is a specific tag for epigenetic transcriptional activation that prevents demethylation of Lys-5 (H3K4me) by LSD1/KDM1A. At centromeres, specifically phosphorylated at Thr-12 (H3T11ph) from prophase to early anaphase, by DAPK3 and PKN1. Phosphorylation at Thr-12 (H3T11ph) by PKN1 or isoform M2 of PKM (PKM2) is a specific tag for epigenetic transcriptional activation that promotes demethylation of Lys-10 (H3K9me) by KDM4C/JMJD2C. Phosphorylation at Tyr-42 (H3Y41ph) by JAK2 promotes exclusion of CBX5 (HP1 alpha) from chromatin. Post-translationally, monoubiquitinated by RAG1 in lymphoid cells, monoubiquitination is required for V(D)J recombination. Ubiquitinated by the CUL4-DDB-RBX1 complex in response to ultraviolet irradiation. This may weaken the interaction between histones and DNA and facilitate DNA accessibility to repair proteins. In terms of processing, lysine deamination at Lys-5 (H3K4all) to form allysine is mediated by LOXL2. Allysine formation by LOXL2 only takes place on H3K4me3 and results in gene repression. Crotonylation (Kcr) is specifically present in male germ cells and marks testis-specific genes in post-meiotic cells, including X-linked genes that escape sex chromosome inactivation in haploid cells. Crotonylation marks active promoters and enhancers and confers resistance to transcriptional repressors. It is also associated with post-meiotically activated genes on autosomes. Post-translationally, butyrylation of histones marks active promoters and competes with histone acetylation. It is present during late spermatogenesis. In terms of processing, succinylation at Lys-80 (H3K79succ) by KAT2A takes place with a maximum frequency around the transcription start sites of genes. It gives a specific tag for epigenetic transcription activation. Desuccinylation at Lys-123 (H3K122succ) by SIRT7 in response to DNA damage promotes chromatin condensation and double-strand breaks (DSBs) repair. Serine ADP-ribosylation by PARP1 or PARP2 constitutes the primary form of ADP-ribosylation of proteins in response to DNA damage. Serine ADP-ribosylation at Ser-11 (H3S10ADPr) promotes recruitment of CHD1L. H3S10ADPr is mutually exclusive with phosphorylation at Ser-11 (H3S10ph) and impairs acetylation at Lys-10 (H3K9ac). Post-translationally, serotonylated by TGM2 at Gln-6 (H3Q5ser) during serotonergic neuron differentiation. H3Q5ser is associated with trimethylation of Lys-5 (H3K4me3) and enhances general transcription factor IID (TFIID) complex-binding to H3K4me3, thereby facilitating transcription. In terms of processing, dopaminylated by TGM2 at Gln-6 (H3Q5dop) in ventral tegmental area (VTA) neurons. H3Q5dop mediates neurotransmission-independent role of nuclear dopamine by regulating relapse-related transcriptional plasticity in the reward system. Lactylated in macrophages by EP300/P300 by using lactoyl-CoA directly derived from endogenous or exogenous lactate, leading to stimulates gene transcription.

The protein resides in the nucleus. It localises to the chromosome. Functionally, core component of nucleosome. Nucleosomes wrap and compact DNA into chromatin, limiting DNA accessibility to the cellular machineries which require DNA as a template. Histones thereby play a central role in transcription regulation, DNA repair, DNA replication and chromosomal stability. DNA accessibility is regulated via a complex set of post-translational modifications of histones, also called histone code, and nucleosome remodeling. This is Histone H3.2 from Cricetulus longicaudatus (Long-tailed dwarf hamster).